A 565-amino-acid polypeptide reads, in one-letter code: Liver carboxylesterase 1 (565 aa).

An N-terminal signal peptide occupies residues 1–18; the sequence is MWLCALALASLAACTAWG. N79 carries an N-linked (GlcNAc...) asparagine glycan. C87 and C116 are disulfide-bonded. The active-site Acyl-ester intermediate is S221. Residues C273 and C284 are joined by a disulfide bond. The active-site Charge relay system is the E353. N-linked (GlcNAc...) asparagine glycosylation occurs at N389. Catalysis depends on H467, which acts as the Charge relay system. Position 565 (L565) is a short sequence motif, prevents secretion from ER.

Belongs to the type-B carboxylesterase/lipase family. In terms of assembly, monomer.

It is found in the endoplasmic reticulum lumen. It carries out the reaction a carboxylic ester + H2O = an alcohol + a carboxylate + H(+). Involved in the detoxification of xenobiotics and in the activation of ester and amide prodrugs. This is Liver carboxylesterase 1 from Oryctolagus cuniculus (Rabbit).